Here is a 147-residue protein sequence, read N- to C-terminus: Lysozyme C (147 aa).

The first 18 residues, 1–18, serve as a signal peptide directing secretion; sequence MRSLLVLVLCFLPLAALG. The region spanning 19-147 is the C-type lysozyme domain; that stretch reads KVYGRCELAA…VNAWIRGCRL (129 aa). Cystine bridges form between C24–C145, C48–C133, C82–C98, and C94–C112. Active-site residues include E53 and D70.

This sequence belongs to the glycosyl hydrolase 22 family. In terms of assembly, monomer.

The protein resides in the secreted. It catalyses the reaction Hydrolysis of (1-&gt;4)-beta-linkages between N-acetylmuramic acid and N-acetyl-D-glucosamine residues in a peptidoglycan and between N-acetyl-D-glucosamine residues in chitodextrins.. In terms of biological role, lysozymes have primarily a bacteriolytic function; those in tissues and body fluids are associated with the monocyte-macrophage system and enhance the activity of immunoagents. The protein is Lysozyme C (LYZ) of Coturnix japonica (Japanese quail).